A 318-amino-acid polypeptide reads, in one-letter code: Ubiquitin-like domain-containing CTD phosphatase 1 (318 aa).

Ala2 carries the post-translational modification N-acetylalanine. In terms of domain architecture, Ubiquitin-like spans 3 to 81 (LPIIVKWGGQ…IMMMGTREES (79 aa)). Lys117 is modified (N6-acetyllysine). Positions 133–294 (PREGKKLLVL…LKLTQYLKEI (162 aa)) constitute an FCP1 homology domain. Mg(2+) contacts are provided by Asp143, Asp145, and Asp253.

It depends on Mg(2+) as a cofactor.

It localises to the nucleus. It catalyses the reaction O-phospho-L-seryl-[protein] + H2O = L-seryl-[protein] + phosphate. The catalysed reaction is O-phospho-L-threonyl-[protein] + H2O = L-threonyl-[protein] + phosphate. Its function is as follows. Dephosphorylates 26S nuclear proteasomes, thereby decreasing their proteolytic activity. Recruited to the 19S regulatory particle of the 26S proteasome through its interaction with 19S component PSMD2/RPN1. Once recruited, dephosphorylates 19S component PSMC2/RPT1 which impairs PSMC2 ATPase activity and disrupts 26S proteasome assembly. Has also been reported to stimulate the proteolytic activity of the 26S proteasome. The sequence is that of Ubiquitin-like domain-containing CTD phosphatase 1 (UBLCP1) from Bos taurus (Bovine).